We begin with the raw amino-acid sequence, 243 residues long: Orotidine 5'-phosphate decarboxylase (243 aa).

Substrate-binding positions include Asp-19, Lys-41, 69-78, Thr-124, Arg-185, Gln-194, Gly-214, and Arg-215; that span reads DLKFFDIPAT. The active-site Proton donor is Lys-71.

Belongs to the OMP decarboxylase family. Type 1 subfamily. In terms of assembly, homodimer.

It catalyses the reaction orotidine 5'-phosphate + H(+) = UMP + CO2. It participates in pyrimidine metabolism; UMP biosynthesis via de novo pathway; UMP from orotate: step 2/2. Functionally, catalyzes the decarboxylation of orotidine 5'-monophosphate (OMP) to uridine 5'-monophosphate (UMP). In Xanthomonas axonopodis pv. citri (strain 306), this protein is Orotidine 5'-phosphate decarboxylase.